The primary structure comprises 234 residues: Urease subunit alpha (234 aa).

The interval 1–102 (MKLTPKELDK…LVTIHTPVEA (102 aa)) is urease gamma. Positions 103-234 (GSDKLAPGEV…GTINCGCDNK (132 aa)) are urease beta.

It in the N-terminal section; belongs to the urease gamma subunit family. The protein in the C-terminal section; belongs to the urease beta subunit family. In terms of assembly, heterohexamer of 3 UreA (alpha) and 3 UreB (beta) subunits.

The protein localises to the cytoplasm. The enzyme catalyses urea + 2 H2O + H(+) = hydrogencarbonate + 2 NH4(+). It participates in nitrogen metabolism; urea degradation; CO(2) and NH(3) from urea (urease route): step 1/1. The chain is Urease subunit alpha from Helicobacter heilmannii.